The sequence spans 511 residues: MEKFEGYSEKLKFPRQYFVYPLLFQEYIYVFAHDYGLNGSELVEIIGSNNKKFSSLLVKRLMIRMYQQNFWINLVNHPNQDRLLDYNNFFYSEFYSQILSEGFAIVVEIPFSLREQSCPEEKEIPKFQNLRSIHSIFPFLEDKFLHLHYLAHIEIPYPIHLDILLQLLQYRIQDVPSLHLLRFFLNYYSNWNSFITSMKSIFILKKENKRLFRFLYNSYVSEYEFFLLFLRKQSSCLRLTSSGTFLERIIFSRKMEHFGLMYPAFFRKTIWFVMDPLMHYVRYQGKAILASKGTLLLKKKWKCYLVRLWQYSFSFWTQPQRIHLNQLENSCFDFLGYFSSVPINSLLVRNQMLENSFLIDTQMKKFDTKVPVTPLIGSLAKAQFCTGSGHPISKPIWTDLSDWDILDRFGRICRNLFHYYSGSSKKKTLYRLKYILRLSCARTLARKHKSTVRAFMQWLGSVFLEEFFTEEEQVFSLMFAKTTYFSFRGSHSERIWYLDILRINDLVNPLN.

It belongs to the intron maturase 2 family. MatK subfamily.

The protein resides in the plastid. Its subcellular location is the chloroplast. In terms of biological role, usually encoded in the trnK tRNA gene intron. Probably assists in splicing its own and other chloroplast group II introns. In Oryza nivara (Indian wild rice), this protein is Maturase K.